The chain runs to 179 residues: uncharacterized protein (179 aa).

4 helical membrane passes run 33–53, 63–83, 89–109, and 115–135; these read HIIA…VILD, VMFI…MLVL, ITAS…FVLT, and FSPF…EYFF.

Its subcellular location is the cell membrane. This is an uncharacterized protein from Bacillus subtilis (strain 168).